A 127-amino-acid chain; its full sequence is Large ribosomal subunit protein bL12c (127 aa).

Residues 104-127 (GVAKDAAEEAKKQIEDAGGKASLK) form a disordered region. The span at 105 to 121 (VAKDAAEEAKKQIEDAG) shows a compositional bias: basic and acidic residues.

This sequence belongs to the bacterial ribosomal protein bL12 family. As to quaternary structure, homodimer. Part of the ribosomal stalk of the 50S ribosomal subunit. Forms a multimeric L10(L12)X complex, where L10 forms an elongated spine to which 2 to 4 L12 dimers bind in a sequential fashion. Binds GTP-bound translation factors.

The protein localises to the plastid. It is found in the chloroplast. Forms part of the ribosomal stalk which helps the ribosome interact with GTP-bound translation factors. Is thus essential for accurate translation. The protein is Large ribosomal subunit protein bL12c of Trieres chinensis (Marine centric diatom).